The primary structure comprises 526 residues: Glutamyl-tRNA(Gln) amidotransferase subunit A, mitochondrial (526 aa).

Lys-76 acts as the Charge relay system in catalysis. The disordered stretch occupies residues 147–166; that stretch reads QYREKRKQNSHSENEDSNWL. Ser-171 functions as the Charge relay system in the catalytic mechanism. Catalysis depends on Ser-195, which acts as the Acyl-ester intermediate.

The protein belongs to the amidase family. GatA subfamily. Subunit of the heterotrimeric GatCAB amidotransferase (AdT) complex, composed of A (QRSL1), B (GATB) and C (GATC) subunits.

The protein resides in the mitochondrion. The enzyme catalyses L-glutamyl-tRNA(Gln) + L-glutamine + ATP + H2O = L-glutaminyl-tRNA(Gln) + L-glutamate + ADP + phosphate + H(+). Its function is as follows. Allows the formation of correctly charged Gln-tRNA(Gln) through the transamidation of misacylated Glu-tRNA(Gln) in the mitochondria. The reaction takes place in the presence of glutamine and ATP through an activated gamma-phospho-Glu-tRNA(Gln). This chain is Glutamyl-tRNA(Gln) amidotransferase subunit A, mitochondrial, found in Bos taurus (Bovine).